The sequence spans 143 residues: Hemoglobin subunit alpha-A (143 aa).

The region spanning 2–143 (SLSGKDKSVV…LALALAERYR (142 aa)) is the Globin domain. O2 is bound at residue His-60. His-89 is a heme b binding site.

Belongs to the globin family. In terms of assembly, heterotetramer of two alpha chains and two beta chains. In terms of tissue distribution, red blood cells.

In terms of biological role, involved in oxygen transport from gills to the various peripheral tissues. This chain is Hemoglobin subunit alpha-A (hbaa), found in Seriola quinqueradiata (Five-ray yellowtail).